The primary structure comprises 127 residues: Aspartate 1-decarboxylase (127 aa).

The Schiff-base intermediate with substrate; via pyruvic acid role is filled by Ser25. Residue Ser25 is modified to Pyruvic acid (Ser). Position 57 (Thr57) interacts with substrate. The Proton donor role is filled by Tyr58. Gly73–Ala75 serves as a coordination point for substrate.

The protein belongs to the PanD family. As to quaternary structure, heterooctamer of four alpha and four beta subunits. Requires pyruvate as cofactor. Is synthesized initially as an inactive proenzyme, which is activated by self-cleavage at a specific serine bond to produce a beta-subunit with a hydroxyl group at its C-terminus and an alpha-subunit with a pyruvoyl group at its N-terminus.

The protein resides in the cytoplasm. The enzyme catalyses L-aspartate + H(+) = beta-alanine + CO2. The protein operates within cofactor biosynthesis; (R)-pantothenate biosynthesis; beta-alanine from L-aspartate: step 1/1. In terms of biological role, catalyzes the pyruvoyl-dependent decarboxylation of aspartate to produce beta-alanine. This Bacillus velezensis (strain DSM 23117 / BGSC 10A6 / LMG 26770 / FZB42) (Bacillus amyloliquefaciens subsp. plantarum) protein is Aspartate 1-decarboxylase.